Reading from the N-terminus, the 81-residue chain is Defensin-like protein 313 (81 aa).

The N-terminal stretch at 1–32 (MESKRSSSSPLLILITTIMIIFIISGPKSVDA) is a signal peptide. Intrachain disulfides connect cysteine 34-cysteine 63, cysteine 45-cysteine 74, and cysteine 49-cysteine 76.

It belongs to the DEFL family.

The protein resides in the secreted. The chain is Defensin-like protein 313 from Arabidopsis thaliana (Mouse-ear cress).